The sequence spans 167 residues: Translationally-controlled tumor protein homolog (167 aa).

The TCTP domain occupies 1–167 (MIIYKDIFSN…WKHGIVEEKI (167 aa)). Ser9 and Ser15 each carry phosphoserine.

Belongs to the TCTP family. In terms of assembly, interacts with the 40S and 60S ribosomal subunits. Interacts with microtubules.

The protein localises to the cytoplasm. Its subcellular location is the cytoskeleton. It is found in the mitochondrion. Involved in protein synthesis. Involved in microtubule stabilization. The polypeptide is Translationally-controlled tumor protein homolog (TMA19) (Saccharomyces cerevisiae (strain ATCC 204508 / S288c) (Baker's yeast)).